Here is a 173-residue protein sequence, read N- to C-terminus: Inorganic pyrophosphatase (173 aa).

K29, R43, and Y55 together coordinate substrate. Mg(2+)-binding residues include D65, D70, and D102. Y141 contacts substrate.

It belongs to the PPase family. In terms of assembly, homohexamer. Mg(2+) is required as a cofactor.

The protein resides in the cytoplasm. It carries out the reaction diphosphate + H2O = 2 phosphate + H(+). In terms of biological role, catalyzes the hydrolysis of inorganic pyrophosphate (PPi) forming two phosphate ions. The polypeptide is Inorganic pyrophosphatase (Rickettsia conorii (strain ATCC VR-613 / Malish 7)).